The following is a 254-amino-acid chain: Triosephosphate isomerase (254 aa).

A substrate-binding site is contributed by 9 to 11; it reads NWK. His-96 serves as the catalytic Electrophile. The active-site Proton acceptor is Glu-169. Substrate-binding positions include Gly-175, Ser-215, and 236–237; that span reads GG.

It belongs to the triosephosphate isomerase family. As to quaternary structure, homodimer.

Its subcellular location is the cytoplasm. The enzyme catalyses D-glyceraldehyde 3-phosphate = dihydroxyacetone phosphate. Its pathway is carbohydrate biosynthesis; gluconeogenesis. The protein operates within carbohydrate degradation; glycolysis; D-glyceraldehyde 3-phosphate from glycerone phosphate: step 1/1. Involved in the gluconeogenesis. Catalyzes stereospecifically the conversion of dihydroxyacetone phosphate (DHAP) to D-glyceraldehyde-3-phosphate (G3P). The protein is Triosephosphate isomerase of Borrelia hermsii (strain HS1 / DAH).